A 602-amino-acid polypeptide reads, in one-letter code: Probable ATP-dependent RNA helicase ddx18 (602 aa).

The span at 1 to 31 (MVSTKVKPTTTTTPTTTVNKTTQPTTTTTAS) shows a compositional bias: low complexity. The interval 1–108 (MVSTKVKPTT…NNDNNTGNVS (108 aa)) is disordered. The span at 50–63 (LASTPSVKQIQSQK) shows a compositional bias: polar residues. The segment covering 79 to 99 (DQEEEDQEEEEQEQEEEENEN) has biased composition (acidic residues). The short motif at 119 to 147 (IEFSNLPIEENTKKSIEEMGFKKMTPIQA) is the Q motif element. Positions 150–325 (ILPLLEGKDL…KVSLNNSPVY (176 aa)) constitute a Helicase ATP-binding domain. ATP is bound at residue 163–170 (ARTGSGKT). Residues 273–276 (DEAD) carry the DEAD box motif. The region spanning 339-509 (GLEQGYVVCP…NVQDQLEKVV (171 aa)) is the Helicase C-terminal domain. Positions 568–602 (SGKADFQKKSNNKSGFAQKQYGSKFPPKDGRQFDR) are disordered. Polar residues predominate over residues 579–588 (NKSGFAQKQY). The segment covering 593 to 602 (PPKDGRQFDR) has biased composition (basic and acidic residues).

It belongs to the DEAD box helicase family. DDX18/HAS1 subfamily.

It localises to the nucleus. The protein resides in the nucleolus. It is found in the chromosome. It catalyses the reaction ATP + H2O = ADP + phosphate + H(+). In terms of biological role, ATP-binding RNA helicase which may be involved in the ribosome biogenesis. The protein is Probable ATP-dependent RNA helicase ddx18 (ddx18) of Dictyostelium discoideum (Social amoeba).